The following is a 360-amino-acid chain: POU domain, class 5, transcription factor 1 (360 aa).

Disordered regions lie at residues 1–53 (MAGH…GVGP) and 87–117 (QGGL…PCTV). The 9aaTAD signature appears at 4 to 12 (HLASDFAFS). Over residues 17–26 (GGGDGPGGPE) the composition is skewed to gly residues. Phosphoserine; by MAPK is present on serine 111. A Glycyl lysine isopeptide (Lys-Gly) (interchain with G-Cter in SUMO) cross-link involves residue lysine 123. One can recognise a POU-specific domain in the interval 138–212 (DIKALQKELE…LLQKWVEEAD (75 aa)). The DNA site is built by arginine 157 and glutamine 164. 2 DNA-binding regions span residues 180 to 186 (SQTTICR) and 193 to 196 (SFKN). A DNA-binding region (homeobox) is located at residues 230 to 289 (RKRKRTSIENRVRGSLENLFLQCPKPTLQQISHIAQQLGLEKDVVRVWFCNRRQKGKRSS). Phosphothreonine is present on threonine 235. Phosphoserine occurs at positions 236, 289, 290, and 355.

It belongs to the POU transcription factor family. Class-5 subfamily. As to quaternary structure, interacts with PKM. Interacts with WWP2. Interacts with UBE2I and ZSCAN10. Interacts with PCGF1. Interacts with ESRRB; recruits ESRRB near the POU5F1-SOX2 element in the NANOG proximal promoter; the interaction is DNA independent. Interacts with ZNF322. Interacts with MAPK8 and MAPK9; the interaction allows MAPK8 and MAPK9 to phosphorylate POU5F1 on Ser-355. Interacts (when phosphorylated on Ser-355) with FBXW8. Interacts with FBXW4. Interacts with SOX2 and SOX15; binds synergistically with either SOX2 or SOX15 to DNA. Interacts with DDX56. In terms of processing, sumoylation enhances the protein stability, DNA binding and transactivation activity. Sumoylation is required for enhanced YES1 expression. Post-translationally, ubiquitinated; undergoes 'Lys-63'-linked polyubiquitination by WWP2 leading to proteasomal degradation. ERK1/2-mediated phosphorylation at Ser-111 promotes nuclear exclusion and proteasomal degradation. Phosphorylation at Thr-235 and Ser-236 decrease DNA-binding and alters ability to activate transcription.

The protein localises to the cytoplasm. Its subcellular location is the nucleus. In terms of biological role, transcription factor that binds to the octamer motif (5'-ATTTGCAT-3'). Forms a trimeric complex with SOX2 or SOX15 on DNA and controls the expression of a number of genes involved in embryonic development such as YES1, FGF4, UTF1 and ZFP206. Critical for early embryogenesis and for embryonic stem cell pluripotency. This Macaca mulatta (Rhesus macaque) protein is POU domain, class 5, transcription factor 1 (POU5F1).